A 576-amino-acid polypeptide reads, in one-letter code: Plant intracellular Ras-group-related LRR protein 4 (576 aa).

Residues Ala-130–Ala-151 show a composition bias toward low complexity. Residues Ala-130–Val-181 are disordered. Residues Ser-160–Arg-180 are compositionally biased toward polar residues. LRR repeat units follow at residues Leu-272–Leu-295, Phe-296–Leu-318, Ser-320–Leu-341, Leu-342–Leu-364, Arg-366–Cys-387, Ser-389–Leu-410, Glu-411–Leu-433, Thr-434–Ala-456, Ser-458–Leu-481, Glu-482–Asn-503, and Lys-505–Lys-527. The GVYW; degenerate motif lies at Gly-528 to Tyr-535.

The protein belongs to the SHOC2 family. In terms of tissue distribution, widely expressed.

Leucine-rich repeat protein that likely mediates protein interactions, possibly in the context of signal transduction. The protein is Plant intracellular Ras-group-related LRR protein 4 (IRL4) of Oryza sativa subsp. japonica (Rice).